The following is a 237-amino-acid chain: uncharacterized protein (237 aa).

An N-terminal signal peptide occupies residues 1 to 28; it reads MVFSFSTFNRLVTFTVMAAIVSVRPLTA.

This is an uncharacterized protein from Sinorhizobium fredii (strain NBRC 101917 / NGR234).